Reading from the N-terminus, the 150-residue chain is Large ribosomal subunit protein bL9 (150 aa).

It belongs to the bacterial ribosomal protein bL9 family.

Binds to the 23S rRNA. In Shewanella sp. (strain MR-4), this protein is Large ribosomal subunit protein bL9.